A 619-amino-acid polypeptide reads, in one-letter code: Nucleolar GTP-binding protein 2 (619 aa).

Over residues Met1–Arg10 the composition is skewed to basic and acidic residues. Positions Met1–Lys24 are disordered. A CP-type G domain is found at Trp222–Pro383. GTP-binding positions include Gly332–Ser339 and Asp376–Ile380. The interval Pro473–Lys619 is disordered. The segment covering Met489–Ser500 has biased composition (basic and acidic residues). Residues Ser536–Ala546 show a composition bias toward acidic residues. The span at Glu547–Ala556 shows a compositional bias: basic and acidic residues. Acidic residues predominate over residues Ser565–Ala603.

This sequence belongs to the TRAFAC class YlqF/YawG GTPase family. NOG2 subfamily.

It is found in the nucleus. Its subcellular location is the nucleolus. GTPase that associates with pre-60S ribosomal subunits in the nucleolus and is required for their nuclear export and maturation. The sequence is that of Nucleolar GTP-binding protein 2 (nog-2) from Neurospora crassa (strain ATCC 24698 / 74-OR23-1A / CBS 708.71 / DSM 1257 / FGSC 987).